Consider the following 183-residue polypeptide: Ribulose bisphosphate carboxylase small subunit, chloroplastic 3 (183 aa).

A chloroplast-targeting transit peptide spans 1 to 57; that stretch reads MASSLMSNAATTMAAATTTAQANMVAPFNGLKSVSAFPVTRKNNDITSVASNGGRVQ.

The protein belongs to the RuBisCO small chain family. Heterohexadecamer of 8 large and 8 small subunits.

It localises to the plastid. The protein localises to the chloroplast. Its function is as follows. RuBisCO catalyzes two reactions: the carboxylation of D-ribulose 1,5-bisphosphate, the primary event in carbon dioxide fixation, as well as the oxidative fragmentation of the pentose substrate. Both reactions occur simultaneously and in competition at the same active site. Although the small subunit is not catalytic it is essential for maximal activity. This Mesembryanthemum crystallinum (Common ice plant) protein is Ribulose bisphosphate carboxylase small subunit, chloroplastic 3.